Here is a 145-residue protein sequence, read N- to C-terminus: SsrA-binding protein (145 aa).

This sequence belongs to the SmpB family.

It is found in the cytoplasm. Functionally, required for rescue of stalled ribosomes mediated by trans-translation. Binds to transfer-messenger RNA (tmRNA), required for stable association of tmRNA with ribosomes. tmRNA and SmpB together mimic tRNA shape, replacing the anticodon stem-loop with SmpB. tmRNA is encoded by the ssrA gene; the 2 termini fold to resemble tRNA(Ala) and it encodes a 'tag peptide', a short internal open reading frame. During trans-translation Ala-aminoacylated tmRNA acts like a tRNA, entering the A-site of stalled ribosomes, displacing the stalled mRNA. The ribosome then switches to translate the ORF on the tmRNA; the nascent peptide is terminated with the 'tag peptide' encoded by the tmRNA and targeted for degradation. The ribosome is freed to recommence translation, which seems to be the essential function of trans-translation. This Mesomycoplasma hyopneumoniae (strain 232) (Mycoplasma hyopneumoniae) protein is SsrA-binding protein.